We begin with the raw amino-acid sequence, 678 residues long: NADPH--cytochrome P450 reductase (678 aa).

N-acetylglycine is present on glycine 2. The Lumenal portion of the chain corresponds to 2 to 21 (GDSHVDTGATSTEAVAEEVS). The helical transmembrane segment at 22–42 (LFSMTDMILLSVLVGFLTYFF) threads the bilayer. At 43–678 (LFRKKKEEIP…KGRYSLDVWS (636 aa)) the chain is on the cytoplasmic side. The residue at position 63 (serine 63) is a Phosphoserine. The Flavodoxin-like domain occupies 80 to 224 (IIVFYGSQTG…DFITWREQFW (145 aa)). FMN-binding positions include 86-91 (SQTGTA), 138-141 (ATYG), 173-182 (LGNKTYEHFN), and aspartate 208. Residues 279-521 (KNPFLAAVTT…FVRKSQFRLP (243 aa)) form the FAD-binding FR-type domain. Residue arginine 298 coordinates NADP(+). FAD-binding positions include arginine 424, 454-457 (RYYS), 472-474 (CAV), tyrosine 478, and 488-491 (GVAT). NADP(+)-binding positions include threonine 535, 596 to 597 (SR), 602 to 606 (KVYVQ), and aspartate 639. Residue tryptophan 677 participates in FAD binding.

It belongs to the NADPH--cytochrome P450 reductase family. The protein in the N-terminal section; belongs to the flavodoxin family. This sequence in the C-terminal section; belongs to the flavoprotein pyridine nucleotide cytochrome reductase family. It depends on FAD as a cofactor. The cofactor is FMN.

Its subcellular location is the endoplasmic reticulum membrane. It carries out the reaction 2 oxidized [cytochrome P450] + NADPH = 2 reduced [cytochrome P450] + NADP(+) + H(+). This enzyme is required for electron transfer from NADP to cytochrome P450 in microsomes. It can also provide electron transfer to heme oxygenase and cytochrome B5. This chain is NADPH--cytochrome P450 reductase, found in Cavia porcellus (Guinea pig).